The sequence spans 540 residues: Beta-2-syntrophin (540 aa).

The segment at 73–114 (LPNGGGAGDSLPGSPSRGLGPPSPPAPPRGPAGEAGASPPVR) is disordered. Low complexity predominate over residues 81 to 92 (DSLPGSPSRGLG). A compositionally biased stretch (pro residues) spans 93 to 102 (PPSPPAPPRG). S95, S110, S129, S211, S222, S233, S393, and S395 each carry phosphoserine. Low complexity predominate over residues 103–112 (PAGEAGASPP). The PDZ domain maps to 115 to 198 (RVRVVKQEAG…EVLLEVKFIR (84 aa)). PH domains are found at residues 163–300 (ILSV…TNIM) and 325–437 (EVKH…QGCH). The tract at residues 220-240 (PQSPSFSGSEDSGSPKHQNST) is disordered. Low complexity predominate over residues 222–231 (SPSFSGSEDS). Positions 484–540 (PFERLKMSADDGIRNLYLDFGGPEGELTMDLHSCPKPIVFVLHTFLSAKVTRMGLLV) constitute an SU domain. The interval 518–540 (PKPIVFVLHTFLSAKVTRMGLLV) is calmodulin-binding.

Belongs to the syntrophin family. Monomer and homodimer. Interacts with the other members of the syntrophin family: SNTA1 and SNTB1; and with the sodium channel proteins SCN4A and SCN5A. Interacts with SAST, MAST205, microtubules and microtubule-associated proteins. Interacts with the dystrophin protein DMD and related proteins DTNA and UTRN, and with the neuroregulin receptor ERBB4. Interacts with PTPRN when phosphorylated, protecting PTPRN from protein cleavage by CAPN1. Dephosphorylation upon insulin stimulation disrupts the interaction with PTPRN and results in the cleavage of PTPRN. Interacts with DTNB. Phosphorylated. Partially dephosphorylated upon insulin stimulation. Ubiquitous. Isoform 1 is the predominant isoform. Weak level of isoform 2 is present in all tested tissues, except in liver and heart where it is highly expressed.

It is found in the membrane. Its subcellular location is the cytoplasmic vesicle. It localises to the secretory vesicle membrane. The protein resides in the cell junction. The protein localises to the cytoplasm. It is found in the cytoskeleton. Its function is as follows. Adapter protein that binds to and probably organizes the subcellular localization of a variety of membrane proteins. May link various receptors to the actin cytoskeleton and the dystrophin glycoprotein complex. May play a role in the regulation of secretory granules via its interaction with PTPRN. The sequence is that of Beta-2-syntrophin (SNTB2) from Homo sapiens (Human).